The chain runs to 76 residues: Small ribosomal subunit protein bS18 (76 aa).

This sequence belongs to the bacterial ribosomal protein bS18 family. Part of the 30S ribosomal subunit. Forms a tight heterodimer with protein bS6.

Functionally, binds as a heterodimer with protein bS6 to the central domain of the 16S rRNA, where it helps stabilize the platform of the 30S subunit. The polypeptide is Small ribosomal subunit protein bS18 (Petrotoga mobilis (strain DSM 10674 / SJ95)).